A 173-amino-acid chain; its full sequence is Lipoprotein signal peptidase (173 aa).

3 helical membrane-spanning segments follow: residues 9–29 (LPFLLTAIVIVVDQVTKILVV), 37–57 (VIPVIGDLVNLRFVYNTGAAF), and 70–90 (ILLVFLPFLLLIALTGAYLKS). Catalysis depends on residues Asp124 and Asp146. A helical membrane pass occupies residues 142–162 (FNAADSFIVCCGIGLGVNLIL).

Belongs to the peptidase A8 family.

The protein resides in the cell inner membrane. It catalyses the reaction Release of signal peptides from bacterial membrane prolipoproteins. Hydrolyzes -Xaa-Yaa-Zaa-|-(S,diacylglyceryl)Cys-, in which Xaa is hydrophobic (preferably Leu), and Yaa (Ala or Ser) and Zaa (Gly or Ala) have small, neutral side chains.. It functions in the pathway protein modification; lipoprotein biosynthesis (signal peptide cleavage). In terms of biological role, this protein specifically catalyzes the removal of signal peptides from prolipoproteins. This is Lipoprotein signal peptidase from Treponema denticola (strain ATCC 35405 / DSM 14222 / CIP 103919 / JCM 8153 / KCTC 15104).